The chain runs to 272 residues: HMP-PP phosphatase (272 aa).

D8 (nucleophile) is an active-site residue. Mg(2+) is bound by residues D8, D10, and D212.

Belongs to the HAD-like hydrolase superfamily. Cof family. The cofactor is Mg(2+).

It carries out the reaction 4-amino-2-methyl-5-(diphosphooxymethyl)pyrimidine + H2O = 4-amino-2-methyl-5-(phosphooxymethyl)pyrimidine + phosphate + H(+). Functionally, catalyzes the hydrolysis of 4-amino-2-methyl-5-hydroxymethylpyrimidine pyrophosphate (HMP-PP) to 4-amino-2-methyl-5-hydroxymethylpyrimidine phosphate (HMP-P). The chain is HMP-PP phosphatase from Escherichia coli O157:H7.